The primary structure comprises 314 residues: tRNA-cytidine(32) 2-sulfurtransferase (314 aa).

A PP-loop motif motif is present at residues 49–54; sequence SGGKDS. The [4Fe-4S] cluster site is built by cysteine 124, cysteine 127, and cysteine 215.

Belongs to the TtcA family. In terms of assembly, homodimer. It depends on Mg(2+) as a cofactor. [4Fe-4S] cluster serves as cofactor.

It localises to the cytoplasm. The catalysed reaction is cytidine(32) in tRNA + S-sulfanyl-L-cysteinyl-[cysteine desulfurase] + AH2 + ATP = 2-thiocytidine(32) in tRNA + L-cysteinyl-[cysteine desulfurase] + A + AMP + diphosphate + H(+). The protein operates within tRNA modification. Functionally, catalyzes the ATP-dependent 2-thiolation of cytidine in position 32 of tRNA, to form 2-thiocytidine (s(2)C32). The sulfur atoms are provided by the cysteine/cysteine desulfurase (IscS) system. The protein is tRNA-cytidine(32) 2-sulfurtransferase of Histophilus somni (strain 129Pt) (Haemophilus somnus).